Consider the following 100-residue polypeptide: Mitochondrial import inner membrane translocase subunit Tim10 B (100 aa).

The Twin CX3C motif motif lies at 25 to 49 (CFQRCVPSLHHRALDAEEEACLHSC). Disulfide bonds link Cys25–Cys49 and Cys29–Cys45.

It belongs to the small Tim family. Component of the TIM22 complex, which core is composed of TIMM22, associated with TIMM10 (TIMM10A and/or TIMM10B), TIMM9, AGK and TIMM29.

The protein resides in the mitochondrion inner membrane. Component of the TIM22 complex, a complex that mediates the import and insertion of multi-pass transmembrane proteins into the mitochondrial inner membrane. The TIM22 complex forms a twin-pore translocase that uses the membrane potential as the external driving force. In the TIM22 complex, it may act as a docking point for the soluble 70 kDa complex that guides the target proteins in transit through the aqueous mitochondrial intermembrane space. This chain is Mitochondrial import inner membrane translocase subunit Tim10 B (Timm10b), found in Mus musculus (Mouse).